The primary structure comprises 448 residues: Divalent metal cation transporter MntH (448 aa).

Basic and acidic residues predominate over residues 1–10; that stretch reads MKKDKTERTK. Positions 1 to 20 are disordered; that stretch reads MKKDKTERTKQSWRKAQNAP. The next 11 membrane-spanning stretches (helical) occupy residues 41-61, 69-89, 117-137, 147-167, 176-196, 215-235, 270-290, 307-327, 363-383, 384-404, and 424-444; these read LFAF…PGNW, SEFG…AVLL, GFVL…AEVI, FGIP…LVLF, IEVI…AEMV, IVTN…TVMP, FSLT…AAAF, LLNP…ALLA, VLAI…GINE, LLIF…IPLV, and IISW…LFYT.

Belongs to the NRAMP family.

It is found in the cell membrane. Its function is as follows. H(+)-stimulated, divalent metal cation uptake system. This chain is Divalent metal cation transporter MntH, found in Listeria monocytogenes serotype 4b (strain CLIP80459).